Here is a 359-residue protein sequence, read N- to C-terminus: 3-dehydroquinate synthase (359 aa).

NAD(+) contacts are provided by residues 72 to 77 (EGEEHK), 106 to 110 (GVVGD), 130 to 131 (TT), K143, K152, and 170 to 173 (TLTT). Residues E185, H248, and H265 each contribute to the Zn(2+) site.

Belongs to the sugar phosphate cyclases superfamily. Dehydroquinate synthase family. The cofactor is Co(2+). It depends on Zn(2+) as a cofactor. Requires NAD(+) as cofactor.

The protein resides in the cytoplasm. It carries out the reaction 7-phospho-2-dehydro-3-deoxy-D-arabino-heptonate = 3-dehydroquinate + phosphate. It participates in metabolic intermediate biosynthesis; chorismate biosynthesis; chorismate from D-erythrose 4-phosphate and phosphoenolpyruvate: step 2/7. In terms of biological role, catalyzes the conversion of 3-deoxy-D-arabino-heptulosonate 7-phosphate (DAHP) to dehydroquinate (DHQ). The chain is 3-dehydroquinate synthase from Pelobacter propionicus (strain DSM 2379 / NBRC 103807 / OttBd1).